Reading from the N-terminus, the 458-residue chain is Pentatricopeptide repeat-containing protein At1g77405 (458 aa).

PPR repeat units follow at residues Thr164–Pro198, Asp199–Tyr233, Asp236–Phe271, Asp282–Pro316, Asn317–Val351, Gly353–Pro387, and Arg388–Gly419.

The protein belongs to the PPR family. P subfamily.

The sequence is that of Pentatricopeptide repeat-containing protein At1g77405 from Arabidopsis thaliana (Mouse-ear cress).